The sequence spans 397 residues: Elongation factor Tu (397 aa).

The 197-residue stretch at 10 to 206 folds into the tr-type G domain; the sequence is KPHVNIGTIG…AVDESIPEPQ (197 aa). Residues 19–26 are G1; that stretch reads GHIDHGKT. 19 to 26 contacts GTP; the sequence is GHIDHGKT. Thr26 is a Mg(2+) binding site. Positions 62–66 are G2; sequence GITIS. Residues 83-86 are G3; that stretch reads DCPG. Residues 83–87 and 138–141 contribute to the GTP site; these read DCPGH and NKAD. The tract at residues 138–141 is G4; sequence NKAD. The interval 176–178 is G5; it reads SAL.

This sequence belongs to the TRAFAC class translation factor GTPase superfamily. Classic translation factor GTPase family. EF-Tu/EF-1A subfamily. Monomer.

The protein resides in the cytoplasm. It carries out the reaction GTP + H2O = GDP + phosphate + H(+). Functionally, GTP hydrolase that promotes the GTP-dependent binding of aminoacyl-tRNA to the A-site of ribosomes during protein biosynthesis. The sequence is that of Elongation factor Tu from Frankia casuarinae (strain DSM 45818 / CECT 9043 / HFP020203 / CcI3).